We begin with the raw amino-acid sequence, 319 residues long: Lipoyl synthase (319 aa).

[4Fe-4S] cluster is bound by residues cysteine 66, cysteine 71, cysteine 77, cysteine 92, cysteine 96, cysteine 99, and serine 305. A Radical SAM core domain is found at 78-294 (FNRGTATFMI…KKEALSIGFT (217 aa)).

The protein belongs to the radical SAM superfamily. Lipoyl synthase family. [4Fe-4S] cluster serves as cofactor.

The protein localises to the cytoplasm. It catalyses the reaction [[Fe-S] cluster scaffold protein carrying a second [4Fe-4S](2+) cluster] + N(6)-octanoyl-L-lysyl-[protein] + 2 oxidized [2Fe-2S]-[ferredoxin] + 2 S-adenosyl-L-methionine + 4 H(+) = [[Fe-S] cluster scaffold protein] + N(6)-[(R)-dihydrolipoyl]-L-lysyl-[protein] + 4 Fe(3+) + 2 hydrogen sulfide + 2 5'-deoxyadenosine + 2 L-methionine + 2 reduced [2Fe-2S]-[ferredoxin]. It participates in protein modification; protein lipoylation via endogenous pathway; protein N(6)-(lipoyl)lysine from octanoyl-[acyl-carrier-protein]: step 2/2. Functionally, catalyzes the radical-mediated insertion of two sulfur atoms into the C-6 and C-8 positions of the octanoyl moiety bound to the lipoyl domains of lipoate-dependent enzymes, thereby converting the octanoylated domains into lipoylated derivatives. The protein is Lipoyl synthase of Buchnera aphidicola subsp. Schizaphis graminum (strain Sg).